The chain runs to 79 residues: MVWQENEDLRKQLVEASELLKSQAKELKDAHQQQKLALQDFLELCELVAELCSQKQKVWDKEGEMEVAMQKVNTMWQES.

The stretch at 4 to 43 (QENEDLRKQLVEASELLKSQAKELKDAHQQQKLALQDFLE) forms a coiled coil.

This is an uncharacterized protein from Homo sapiens (Human).